The primary structure comprises 435 residues: Putative acid phosphatase F26C11.1 (435 aa).

His38 acts as the Nucleophile in catalysis. Asp317 serves as the catalytic Proton donor. An intrachain disulfide couples Cys382 to Cys388.

This sequence belongs to the histidine acid phosphatase family.

It catalyses the reaction a phosphate monoester + H2O = an alcohol + phosphate. The sequence is that of Putative acid phosphatase F26C11.1 from Caenorhabditis elegans.